The primary structure comprises 82 residues: Acyl carrier protein (82 aa).

The region spanning 4 to 79 (PEMEERLRKI…DALNYLETHQ (76 aa)) is the Carrier domain. O-(pantetheine 4'-phosphoryl)serine is present on Ser-39.

This sequence belongs to the acyl carrier protein (ACP) family. Post-translationally, 4'-phosphopantetheine is transferred from CoA to a specific serine of apo-ACP by AcpS. This modification is essential for activity because fatty acids are bound in thioester linkage to the sulfhydryl of the prosthetic group.

It is found in the cytoplasm. Its pathway is lipid metabolism; fatty acid biosynthesis. Functionally, carrier of the growing fatty acid chain in fatty acid biosynthesis. The sequence is that of Acyl carrier protein from Chloroflexus aurantiacus (strain ATCC 29366 / DSM 635 / J-10-fl).